The primary structure comprises 178 residues: MTSVNLSYPIGEYKPRESISKEQKDKWIQVLEEVPAKLKQAVEVMTDSQLDTPYRDGGWTVRQVVHHLADSHMNSYIRFKLSLTEETPAIRPYDEKAWSELKDSKTADPSGSLALLQELHGRWTALLRTLTDQQFKRGFYHPDTKEIITLENALGLYVWHSHHHIAHITELSRRMGWS.

Zn(2+) is bound by residues histidine 67, histidine 160, and histidine 164.

Belongs to the metal hydrolase YfiT family. In terms of assembly, homodimer. Zn(2+) serves as cofactor. Requires Ni(2+) as cofactor.

It is found in the cytoplasm. Functionally, possible metal-dependent hydrolase. The polypeptide is Putative metal-dependent hydrolase YfiT (yfiT) (Bacillus subtilis (strain 168)).